The following is a 23-amino-acid chain: Clavanin-B (23 aa).

Phe23 bears the Phenylalanine amide mark.

The protein resides in the secreted. Has antimicrobial activity. The protein is Clavanin-B of Styela clava (Sea squirt).